Consider the following 154-residue polypeptide: uncharacterized protein (154 aa).

2 consecutive transmembrane segments (helical) span residues 19–39 and 51–71; these read LFAY…GLLL and ADQV…LLFA.

It is found in the cell membrane. This is an uncharacterized protein from Mycobacterium tuberculosis (strain CDC 1551 / Oshkosh).